A 398-amino-acid polypeptide reads, in one-letter code: Probable aminomethyltransferase (398 aa).

Belongs to the GcvT family. The glycine cleavage system is composed of four proteins: P, T, L and H.

The catalysed reaction is N(6)-[(R)-S(8)-aminomethyldihydrolipoyl]-L-lysyl-[protein] + (6S)-5,6,7,8-tetrahydrofolate = N(6)-[(R)-dihydrolipoyl]-L-lysyl-[protein] + (6R)-5,10-methylene-5,6,7,8-tetrahydrofolate + NH4(+). In terms of biological role, the glycine cleavage system catalyzes the degradation of glycine. This chain is Probable aminomethyltransferase, found in Pyrococcus horikoshii (strain ATCC 700860 / DSM 12428 / JCM 9974 / NBRC 100139 / OT-3).